A 107-amino-acid polypeptide reads, in one-letter code: MLLKQLPQAVQQIRCISSATTAVTRLHRSVYCRLYPTVVVQPDGSTINIRYHEPRKIIKLPLDLSTLTDAERRARLEARKPRKKVKIMEEVEDNFNAKKYMKYIKKK.

Residues 1–16 constitute a mitochondrion transit peptide; the sequence is MLLKQLPQAVQQIRCI.

It belongs to the mitochondrion-specific ribosomal protein mL55 family. Component of the mitochondrial ribosome large subunit (39S) which comprises a 16S rRNA and about 50 distinct proteins. Ubiquitously expressed (at protein level).

It is found in the mitochondrion. Involved in mitochondrial biogenesis and G2/M phase cell cycle progression. The chain is Large ribosomal subunit protein mL55 (mRpL55) from Drosophila melanogaster (Fruit fly).